We begin with the raw amino-acid sequence, 161 residues long: NADH-quinone oxidoreductase subunit I (161 aa).

4Fe-4S ferredoxin-type domains are found at residues 52 to 82 (LRRY…IEAK) and 92 to 121 (TKYD…EGPN). 8 residues coordinate [4Fe-4S] cluster: cysteine 62, cysteine 65, cysteine 68, cysteine 72, cysteine 101, cysteine 104, cysteine 107, and cysteine 111.

The protein belongs to the complex I 23 kDa subunit family. As to quaternary structure, NDH-1 is composed of 14 different subunits. Subunits NuoA, H, J, K, L, M, N constitute the membrane sector of the complex. The cofactor is [4Fe-4S] cluster.

It is found in the cell inner membrane. The catalysed reaction is a quinone + NADH + 5 H(+)(in) = a quinol + NAD(+) + 4 H(+)(out). In terms of biological role, NDH-1 shuttles electrons from NADH, via FMN and iron-sulfur (Fe-S) centers, to quinones in the respiratory chain. The immediate electron acceptor for the enzyme in this species is believed to be ubiquinone. Couples the redox reaction to proton translocation (for every two electrons transferred, four hydrogen ions are translocated across the cytoplasmic membrane), and thus conserves the redox energy in a proton gradient. The sequence is that of NADH-quinone oxidoreductase subunit I from Orientia tsutsugamushi (strain Boryong) (Rickettsia tsutsugamushi).